Here is a 477-residue protein sequence, read N- to C-terminus: Argininosuccinate lyase (477 aa).

The protein belongs to the lyase 1 family. Argininosuccinate lyase subfamily.

The protein resides in the cytoplasm. The enzyme catalyses 2-(N(omega)-L-arginino)succinate = fumarate + L-arginine. It participates in amino-acid biosynthesis; L-arginine biosynthesis; L-arginine from L-ornithine and carbamoyl phosphate: step 3/3. This Corynebacterium diphtheriae (strain ATCC 700971 / NCTC 13129 / Biotype gravis) protein is Argininosuccinate lyase.